The following is a 395-amino-acid chain: Cytoplasmic 60S subunit biogenesis factor REI1 homolog 2 (395 aa).

C2H2-type zinc fingers lie at residues 4 to 28 (LACNSCNKDFEDDAEQKFHYKSEWH), 68 to 92 (YSCGICNKGYRSSKAHEQHLKSKSH), 171 to 194 (ACCLMCDKKHKTIEKCMVHMHKFH), and 222 to 249 (FVCLYCNELCHPFSSLEAVRKHMDAKGH).

Belongs to the REI1 family. In terms of assembly, can form homodimer. Interacts with RLP24, RLP24A, RPL24B, EBP1 and JJJ1.

Its subcellular location is the cytoplasm. In terms of biological role, pre-60S-associated factor involved in the cytoplasmic maturation of the 60S subunit. Involved in the dissociation and recycling of other late pre-60S factors before newly synthesized large ribosomal subunits enter translation. Can complement the growth defect of a yeast mutant lacking REI1. Required for leaf growth under cold temperature conditions. The sequence is that of Cytoplasmic 60S subunit biogenesis factor REI1 homolog 2 from Arabidopsis thaliana (Mouse-ear cress).